The chain runs to 474 residues: Neuronal acetylcholine receptor subunit eat-2 (474 aa).

Positions 1-21 are cleaved as a signal peptide; it reads MTLKIAFFTLILLVSIERVYS. Residues 22–237 lie on the Extracellular side of the membrane; it reads SDEEYRLLKD…MHLKRRTMYY (216 aa). A glycan (N-linked (GlcNAc...) asparagine) is linked at Asn-95. Residues Cys-149 and Cys-163 are joined by a disulfide bond. The next 3 helical transmembrane spans lie at 238-258, 266-286, and 303-323; these read GLNWIVPSILISLSNILGFTM, ITLQITNFLSVMVFLAMVSEV, and LSIVILGLSICASLIIVNIFF. The Cytoplasmic segment spans residues 324 to 440; that stretch reads RHPKTHRMGD…WRFMAMVIDR (117 aa). The tract at residues 359-378 is disordered; it reads PRREEEKNDEEAGGDGTKLL. A helical transmembrane segment spans residues 441-461; that stretch reads LSLFLFTGLIFGTTALIFAFC.

The protein belongs to the ligand-gated ion channel (TC 1.A.9) family. Acetylcholine receptor (TC 1.A.9.1) subfamily. As to quaternary structure, neuronal AChR seems to be composed of two different type of subunits: alpha and beta. In terms of tissue distribution, expressed in pharyngeal muscle.

It is found in the postsynaptic cell membrane. It localises to the cell membrane. In terms of biological role, after binding acetylcholine, the AChR responds by an extensive change in conformation that affects all subunits and leads to opening of an ion-conducting channel across the plasma membrane. Nicotinic acetylcholine receptor in the MC pharyngeal motor neuron involved in pharyngeal pumping. Has a role in the determination of life span possibly via calorific restriction which affects growth rate, although this is independent of metabolic activity. Plays a role in the defense against the accumulation of ingested live pathogenic bacteria in the intestine. The sequence is that of Neuronal acetylcholine receptor subunit eat-2 from Caenorhabditis elegans.